A 331-amino-acid chain; its full sequence is Glycerol-3-phosphate dehydrogenase [NAD(P)+] (331 aa).

NADPH contacts are provided by Ser-10, Trp-11, and Lys-101. Positions 101, 132, and 134 each coordinate sn-glycerol 3-phosphate. Position 136 (Ala-136) interacts with NADPH. Residues Lys-188, Asp-241, Ser-251, Arg-252, and Asn-253 each coordinate sn-glycerol 3-phosphate. The active-site Proton acceptor is the Lys-188. An NADPH-binding site is contributed by Arg-252. Residues Val-276 and Glu-278 each contribute to the NADPH site.

Belongs to the NAD-dependent glycerol-3-phosphate dehydrogenase family.

The protein localises to the cytoplasm. The enzyme catalyses sn-glycerol 3-phosphate + NAD(+) = dihydroxyacetone phosphate + NADH + H(+). It carries out the reaction sn-glycerol 3-phosphate + NADP(+) = dihydroxyacetone phosphate + NADPH + H(+). It participates in membrane lipid metabolism; glycerophospholipid metabolism. Functionally, catalyzes the reduction of the glycolytic intermediate dihydroxyacetone phosphate (DHAP) to sn-glycerol 3-phosphate (G3P), the key precursor for phospholipid synthesis. The polypeptide is Glycerol-3-phosphate dehydrogenase [NAD(P)+] (Acholeplasma laidlawii (strain PG-8A)).